The following is a 326-amino-acid chain: Olfactory receptor 8A1 (326 aa).

Over 1 to 45 the chain is Extracellular; sequence MGFLSPMHPCRPPTQRRMAAGNHSTVTEFILKGLTKRADLQLPLF. N-linked (GlcNAc...) asparagine glycosylation is present at Asn22. Residues 46–66 traverse the membrane as a helical segment; it reads LLFLGIYLVTIVGNLGMITLI. At 67 to 77 the chain is on the cytoplasmic side; that stretch reads CLNSQLHTPMY. Residues 78 to 100 form a helical membrane-spanning segment; the sequence is YFLSNLSLMDLCYSSVITPKMLV. Topologically, residues 101–116 are extracellular; it reads NFVSEKNIISYAGCMS. Cysteines 114 and 195 form a disulfide. A helical membrane pass occupies residues 117-137; it reads QLYFFLVFVIAECYMLTVMAY. Residues 138-150 lie on the Cytoplasmic side of the membrane; the sequence is DRYVAICHPLLYN. Residues 151–171 traverse the membrane as a helical segment; sequence IIMSHHTCLLLVAVVYAIGLI. Residues 172–222 lie on the Extracellular side of the membrane; that stretch reads GSTIETGLMLKLPYCEHLISHYFCDILPLMKLSCSSTYDVEMTVFFSAGFN. Residues 223-243 form a helical membrane-spanning segment; the sequence is IIVTSLTVLVSYTFILSSILG. At 244 to 260 the chain is on the cytoplasmic side; the sequence is ISTTEGRSKAFSTCSSH. The chain crosses the membrane as a helical span at residues 261–281; the sequence is LAAVGMFYGSTAFMYLKPSTI. Topologically, residues 282–287 are extracellular; sequence SSLTQE. A helical transmembrane segment spans residues 288–308; the sequence is NVASVFYTTVIPMLNPLIYSL. At 309-326 the chain is on the cytoplasmic side; the sequence is RNKEVKAAVQKTLRGKLF.

It belongs to the G-protein coupled receptor 1 family.

The protein localises to the cell membrane. Functionally, odorant receptor. The polypeptide is Olfactory receptor 8A1 (OR8A1) (Homo sapiens (Human)).